Consider the following 158-residue polypeptide: Cyclic pyranopterin monophosphate synthase (158 aa).

Substrate is bound by residues 73 to 75 (LCH) and 110 to 111 (ME). Asp125 is an active-site residue.

The protein belongs to the MoaC family. As to quaternary structure, homohexamer; trimer of dimers.

It catalyses the reaction (8S)-3',8-cyclo-7,8-dihydroguanosine 5'-triphosphate = cyclic pyranopterin phosphate + diphosphate. It functions in the pathway cofactor biosynthesis; molybdopterin biosynthesis. Its function is as follows. Catalyzes the conversion of (8S)-3',8-cyclo-7,8-dihydroguanosine 5'-triphosphate to cyclic pyranopterin monophosphate (cPMP). This chain is Cyclic pyranopterin monophosphate synthase, found in Ectopseudomonas mendocina (strain ymp) (Pseudomonas mendocina).